Here is a 140-residue protein sequence, read N- to C-terminus: uncharacterized protein (140 aa).

2 consecutive transmembrane segments (helical) span residues 63–83 (LGFV…TLAT) and 119–139 (ILLY…IFIN).

Its subcellular location is the membrane. This is an uncharacterized protein from Schizosaccharomyces pombe (strain 972 / ATCC 24843) (Fission yeast).